The chain runs to 257 residues: 5'-nucleotidase SurE (257 aa).

Residues D15, D16, S46, and N99 each coordinate a divalent metal cation.

This sequence belongs to the SurE nucleotidase family. A divalent metal cation serves as cofactor.

It is found in the cytoplasm. The enzyme catalyses a ribonucleoside 5'-phosphate + H2O = a ribonucleoside + phosphate. Its function is as follows. Nucleotidase that shows phosphatase activity on nucleoside 5'-monophosphates. This chain is 5'-nucleotidase SurE, found in Aliivibrio fischeri (strain ATCC 700601 / ES114) (Vibrio fischeri).